A 202-amino-acid polypeptide reads, in one-letter code: Glycerol-3-phosphate acyltransferase (202 aa).

Helical transmembrane passes span Ala2 to Val22, Leu80 to Val100, Ala119 to Phe139, and Val158 to Ile178.

Belongs to the PlsY family. In terms of assembly, probably interacts with PlsX.

It is found in the cell inner membrane. The catalysed reaction is an acyl phosphate + sn-glycerol 3-phosphate = a 1-acyl-sn-glycero-3-phosphate + phosphate. The protein operates within lipid metabolism; phospholipid metabolism. Its function is as follows. Catalyzes the transfer of an acyl group from acyl-phosphate (acyl-PO(4)) to glycerol-3-phosphate (G3P) to form lysophosphatidic acid (LPA). This enzyme utilizes acyl-phosphate as fatty acyl donor, but not acyl-CoA or acyl-ACP. In Cupriavidus necator (strain ATCC 17699 / DSM 428 / KCTC 22496 / NCIMB 10442 / H16 / Stanier 337) (Ralstonia eutropha), this protein is Glycerol-3-phosphate acyltransferase.